The chain runs to 428 residues: Light-independent protochlorophyllide reductase subunit N (428 aa).

Residues C29, C54, and C115 each coordinate [4Fe-4S] cluster.

Belongs to the BchN/ChlN family. In terms of assembly, protochlorophyllide reductase is composed of three subunits; BchL, BchN and BchB. Forms a heterotetramer of two BchB and two BchN subunits. It depends on [4Fe-4S] cluster as a cofactor.

It carries out the reaction chlorophyllide a + oxidized 2[4Fe-4S]-[ferredoxin] + 2 ADP + 2 phosphate = protochlorophyllide a + reduced 2[4Fe-4S]-[ferredoxin] + 2 ATP + 2 H2O. Its pathway is porphyrin-containing compound metabolism; bacteriochlorophyll biosynthesis (light-independent). Its function is as follows. Component of the dark-operative protochlorophyllide reductase (DPOR) that uses Mg-ATP and reduced ferredoxin to reduce ring D of protochlorophyllide (Pchlide) to form chlorophyllide a (Chlide). This reaction is light-independent. The NB-protein (BchN-BchB) is the catalytic component of the complex. The protein is Light-independent protochlorophyllide reductase subunit N of Cereibacter sphaeroides (strain ATCC 17023 / DSM 158 / JCM 6121 / CCUG 31486 / LMG 2827 / NBRC 12203 / NCIMB 8253 / ATH 2.4.1.) (Rhodobacter sphaeroides).